The following is a 205-amino-acid chain: Putative lipoprotein LppC (205 aa).

The first 27 residues, methionine 1–glycine 27, serve as a signal peptide directing secretion. Cysteine 28 carries N-palmitoyl cysteine lipidation. The S-diacylglycerol cysteine moiety is linked to residue cysteine 28. Residues glycine 126 to glycine 145 are disordered.

The protein belongs to the UPF0098 family.

It is found in the cell membrane. The chain is Putative lipoprotein LppC (lppC) from Mycobacterium tuberculosis (strain CDC 1551 / Oshkosh).